Consider the following 512-residue polypeptide: Protein male-specific lethal-3 (512 aa).

Positions 11–90 constitute a Chromo domain; sequence FHKGEIVLCY…QLQRELAEAA (80 aa). Residues 98 to 175 form a disordered region; sequence YSYKGTPDKP…DGRLKGNRGR (78 aa). Positions 149-169 are enriched in basic and acidic residues; the sequence is RTRDNSGGKRKEKPPSGDGRL. The region spanning 196–500 is the MRG domain; that stretch reads QEDRIMMRVS…STALPQEDLQ (305 aa).

Component of the male-specific lethal (MSL) histone acetyltransferase complex, composed of mof, mle, msl-1, msl-2 and msl-3 proteins, as well as roX1 and roX2 non-coding RNAs. Component of a maternal MSL subcomplex composed of mof, msl-1 and msl-3. Post-translationally, ubiquitinated by msl-2.

The protein localises to the nucleus. Its subcellular location is the chromosome. Component of the male-specific lethal (MSL) histone acetyltransferase complex, a multiprotein complex essential for elevating transcription of the single X chromosome in the male (X chromosome dosage compensation). The MSL complex specifically associates with the single X chromosome in males and mediates formation of H4K16ac, promoting a two-fold activation of X chromosome. Acts as a histone reader that specifically recognizes and binds histone H3 trimethylated at 'Lys-36' (H3K36me3) and histone H4 monomethylated at 'Lys-20' (H4K20me1). Within the MSL complex, mediates the spreading of the MSL complex from initiation sites on the male X chromosome to flanking chromatin. Following initial recruitment of the MSL complex to male X chromosome by msl-2, msl-3 binds H3K36me3 and promotes spreading of the MSL complex in cis. In addition to its role in dosage compensation in males, promotes germline stem cell differentiation in females: recognizes and binds H3K36me3, promoting recruitment of the ATAC complex and transcription of genes, such as RpS19b. In Drosophila melanogaster (Fruit fly), this protein is Protein male-specific lethal-3.